The chain runs to 782 residues: E3 UFM1-protein ligase 1 homolog (782 aa).

Positions 405–478 (VSTQELEDDG…TRGGGGASKK (74 aa)) are disordered.

This sequence belongs to the UFL1 family.

In terms of biological role, E3 UFM1-protein ligase that mediates ufmylation of target proteins. The sequence is that of E3 UFM1-protein ligase 1 homolog from Drosophila sechellia (Fruit fly).